A 274-amino-acid polypeptide reads, in one-letter code: Merozoite surface protein 2 (274 aa).

An N-terminal signal peptide occupies residues 1 to 20; that stretch reads MKVIKTLSIINFFIFVTFNI. N-linked (GlcNAc...) asparagine glycans are attached at residues Asn-22 and Asn-36. A disordered region spans residues 43-234; it reads MAESKPPTGT…SDSQKECTDG (192 aa). The polymorphic region stretch occupies residues 44-200; it reads AESKPPTGTG…EQTESPELQS (157 aa). A run of 2 repeats spans residues 53–62 and 63–72. The segment at 53-72 is 2 X 10 AA tandem repeats of G-A-S-G-S-A-G-S-G-[AD]; it reads GASGSAGSGAGASGSAGSGD. Over residues 53–72 the composition is skewed to gly residues; it reads GASGSAGSGAGASGSAGSGD. The span at 91–121 shows a compositional bias: low complexity; sequence SSSTPATTTTTTTTTTTTTTNDAEASTSTSS. Polar residues-rich tracts occupy residues 122-131, 140-167, and 174-202; these read ENPNHNNAET, QKSN…NVPP, and KSPT…QSAP. An N-linked (GlcNAc...) asparagine glycan is attached at Asn-151. N-linked (GlcNAc...) asparagine glycosylation is present at Asn-223. Cys-231 and Cys-239 form a disulfide bridge. Asn-248 is a glycosylation site (N-linked (GlcNAc...) asparagine). Asn-248 carries GPI-anchor amidated asparagine lipidation. The propeptide at 249–274 is removed in mature form; the sequence is SSNIASINKFVVLISAKLVLSFAIFI.

It localises to the cell membrane. Its function is as follows. May play a role in the merozoite attachment to the erythrocyte. The sequence is that of Merozoite surface protein 2 from Plasmodium falciparum (isolate kf1916).